The primary structure comprises 207 residues: Guanylate kinase (207 aa).

The 180-residue stretch at 6–185 (GLLIVLSGPS…AKNRIQSIVE (180 aa)) folds into the Guanylate kinase-like domain. 13–20 (GPSGVGKG) contributes to the ATP binding site.

It belongs to the guanylate kinase family.

Its subcellular location is the cytoplasm. The catalysed reaction is GMP + ATP = GDP + ADP. Essential for recycling GMP and indirectly, cGMP. This Staphylococcus epidermidis (strain ATCC 35984 / DSM 28319 / BCRC 17069 / CCUG 31568 / BM 3577 / RP62A) protein is Guanylate kinase.